We begin with the raw amino-acid sequence, 246 residues long: DNA repair protein RecO (246 aa).

It belongs to the RecO family.

In terms of biological role, involved in DNA repair and RecF pathway recombination. In Proteus mirabilis (strain HI4320), this protein is DNA repair protein RecO.